The sequence spans 38 residues: Photosystem II reaction center protein L (38 aa).

A helical membrane pass occupies residues 17–37 (SLYWGLLLIFVLAVLFSNYFF).

Belongs to the PsbL family. In terms of assembly, PSII is composed of 1 copy each of membrane proteins PsbA, PsbB, PsbC, PsbD, PsbE, PsbF, PsbH, PsbI, PsbJ, PsbK, PsbL, PsbM, PsbT, PsbX, PsbY, PsbZ, Psb30/Ycf12, at least 3 peripheral proteins of the oxygen-evolving complex and a large number of cofactors. It forms dimeric complexes.

It localises to the plastid. It is found in the chloroplast thylakoid membrane. In terms of biological role, one of the components of the core complex of photosystem II (PSII). PSII is a light-driven water:plastoquinone oxidoreductase that uses light energy to abstract electrons from H(2)O, generating O(2) and a proton gradient subsequently used for ATP formation. It consists of a core antenna complex that captures photons, and an electron transfer chain that converts photonic excitation into a charge separation. This subunit is found at the monomer-monomer interface and is required for correct PSII assembly and/or dimerization. The chain is Photosystem II reaction center protein L from Angiopteris evecta (Mule's foot fern).